Reading from the N-terminus, the 150-residue chain is PTS system galactitol-specific EIIA component (150 aa).

Residues 1–144 form the PTS EIIA type-2 domain; sequence MTNLFVRSGI…TQLKEYFTKY (144 aa). The Tele-phosphohistidine intermediate role is filled by His62. Phosphohistidine; by HPr is present on His62.

As to quaternary structure, forms a complex with one each of subunit of GatA, GatB and 2 subunits of GatC.

The protein localises to the cytoplasm. The phosphoenolpyruvate-dependent sugar phosphotransferase system (sugar PTS), a major carbohydrate active transport system, catalyzes the phosphorylation of incoming sugar substrates concomitantly with their translocation across the cell membrane. The enzyme II complex composed of GatA, GatB and GatC is involved in galactitol transport. The chain is PTS system galactitol-specific EIIA component (gatA) from Escherichia coli O157:H7.